Reading from the N-terminus, the 561-residue chain is Arginine--tRNA ligase (561 aa).

The 'HIGH' region signature appears at 129 to 139 (ANPTGPLHVGH).

Belongs to the class-I aminoacyl-tRNA synthetase family. In terms of assembly, monomer.

Its subcellular location is the cytoplasm. It catalyses the reaction tRNA(Arg) + L-arginine + ATP = L-arginyl-tRNA(Arg) + AMP + diphosphate. This chain is Arginine--tRNA ligase, found in Bordetella bronchiseptica (strain ATCC BAA-588 / NCTC 13252 / RB50) (Alcaligenes bronchisepticus).